The following is a 483-amino-acid chain: Glycogen synthase (483 aa).

Lys-15 is an ADP-alpha-D-glucose binding site.

This sequence belongs to the glycosyltransferase 1 family. Bacterial/plant glycogen synthase subfamily.

It catalyses the reaction [(1-&gt;4)-alpha-D-glucosyl](n) + ADP-alpha-D-glucose = [(1-&gt;4)-alpha-D-glucosyl](n+1) + ADP + H(+). It functions in the pathway glycan biosynthesis; glycogen biosynthesis. Synthesizes alpha-1,4-glucan chains using ADP-glucose. The polypeptide is Glycogen synthase (Exiguobacterium sibiricum (strain DSM 17290 / CCUG 55495 / CIP 109462 / JCM 13490 / 255-15)).